We begin with the raw amino-acid sequence, 392 residues long: MAAAALGQIWARKLLSVPWLLCGPRRYASSSFKAADLQLEMTQKPHKKPGPGEPLVFGKTFTDHMLMVEWNDKGWGQPRIQPFQNLTLHPASSSLHYSLQLFEGMKAFKGKDQQVRLFRPWLNMDRMLRSAMRLCLPSFDKLELLECIRRLIEVDKDWVPDAAGTSLYVRPVLIGNEPSLGVSQPTRALLFVILCPVGAYFPGGSVTPVSLLADPAFIRAWVGGVGNYKLGGNYGPTVLVQQEALKRGCEQVLWLYGPDHQLTEVGTMNIFVYWTHEDGVLELVTPPLNGVILPGVVRQSLLDMAQTWGEFRVVERTITMKQLLRALEEGRVREVFGSGTACQVCPVHRILYKDRNLHIPTMENGPELILRFQKELKEIQYGIRAHEWMFPV.

The transit peptide at 1–27 directs the protein to the mitochondrion; the sequence is MAAAALGQIWARKLLSVPWLLCGPRRY. Tyr-168 contributes to the substrate binding site. Lys-229 carries the post-translational modification N6-(pyridoxal phosphate)lysine. Residue Lys-321 is modified to N6-acetyllysine.

This sequence belongs to the class-IV pyridoxal-phosphate-dependent aminotransferase family. Homodimer. Pyridoxal 5'-phosphate is required as a cofactor. Ubiquitous.

The protein localises to the mitochondrion. It carries out the reaction L-leucine + 2-oxoglutarate = 4-methyl-2-oxopentanoate + L-glutamate. It catalyses the reaction L-isoleucine + 2-oxoglutarate = (S)-3-methyl-2-oxopentanoate + L-glutamate. The enzyme catalyses L-valine + 2-oxoglutarate = 3-methyl-2-oxobutanoate + L-glutamate. Functionally, catalyzes the first reaction in the catabolism of the essential branched chain amino acids leucine, isoleucine, and valine. May also function as a transporter of branched chain alpha-keto acids. The protein is Branched-chain-amino-acid aminotransferase, mitochondrial (BCAT2) of Homo sapiens (Human).